The following is a 183-amino-acid chain: Translocon-associated protein subunit beta (183 aa).

An N-terminal signal peptide occupies residues 1–17 (MRLLAVVVLALLAVSQA). The Lumenal portion of the chain corresponds to 18–146 (EEGARLLASK…REFDRRFSPH (129 aa)). The N-linked (GlcNAc...) (high mannose) asparagine glycan is linked to Asn-88. Asn-104 carries N-linked (GlcNAc...) asparagine glycosylation. The helical transmembrane segment at 147–167 (FLDWAAFGVMTLPSIGIPLLL) threads the bilayer. Residues 168-183 (WYSSKRKYDTPKPKKN) are Cytoplasmic-facing.

Belongs to the TRAP-beta family. As to quaternary structure, heterotetramer of TRAP-alpha, TRAP-beta, TRAP-delta and TRAP-gamma. Interacts with STING1.

It is found in the endoplasmic reticulum membrane. In terms of biological role, TRAP proteins are part of a complex whose function is to bind calcium to the ER membrane and thereby regulate the retention of ER resident proteins. The protein is Translocon-associated protein subunit beta (Ssr2) of Mus musculus (Mouse).